A 219-amino-acid chain; its full sequence is uncharacterized protein (219 aa).

The span at 139–154 (PRKIKQKKKTKKKRPS) shows a compositional bias: basic residues. Residues 139 to 160 (PRKIKQKKKTKKKRPSKSAPKT) form a disordered region. A LysM domain is found at 159 to 217 (KTYTVKKGDTLWDLAGKFYGDSTKWRKIWKVNKKAMIKRSKRNIRQPGHWIFPGQKLKI).

This is an uncharacterized protein from Bacillus subtilis (strain 168).